The sequence spans 366 residues: MIDLREDTWTLQLYAQRYKGLSPKNSRELQLRMEYDPLKPNLPTSGEEQNSKPEWLNTPPCLIPESESLDKAKGALVGLAIGDAIGTTLEFLPRDKLHVNDMVGGGPFRLQPGEWTDDTSMALCLAESYISAGRLDITLFREKLVRWYRHGENSSNGRCFDIGNTTRNALEQYLKHGASWFGNTEPETAGNAAIIRQAPTSIFRRKSLQRTFADSDSQSMATHCAPESMASCQFLGFILNYLINGSSREKAFSPHVMPLPVRVLLINAGEYKEKKRDEIRSSGYVIDTLEAAMWAVWNTDNFHDAILLAANLGDDADSVAATTGQIAGALYGYSNIPKPWLDKLVQQERISNLAEQLFYMAPEEDF.

Residues 1 to 65 (MIDLREDTWT…LNTPPCLIPE (65 aa)) form an N-terminal extension region. An ADP-ribosyl hydrolase domain region spans residues 74-366 (GALVGLAIGD…LFYMAPEEDF (293 aa)). Residues T116, D117, D118, D161, and D317 each coordinate Mg(2+).

Belongs to the ADP-ribosylglycohydrolase family. In terms of assembly, forms a stable complex with cognate effector protein Tre1-Sp. The cofactor is Mg(2+).

The enzyme catalyses N(omega)-(ADP-D-ribosyl)-L-arginyl-[protein] + H2O = ADP-D-ribose + L-arginyl-[protein]. In terms of biological role, immunity component of a contact-dependent interbacterial competition system (also called effector-immunity systems). Acts as an arginine mono-ADP-ribosylhydrolase, mediating the removal of mono-ADP-ribose attached to arginine residues on proteins. De-ADP-ribosylates FtsZ, is able to act on other proteins as well. Neutralizes the toxic activity of cognate toxin Tre1-Sp. Expression of this protein alone in E.coli partially protects the cells against competition by wild-type S.proteamaculans. Neutralizes Tre1-Sp both by occluding its active site via its N-terminal extension and by hydrolyzing the ADP-ribosyl moiety from FtsZ; the 2 activities are dissociable by mutagenesis. The protein is ADP-ribosylarginine hydrolase Tri1 of Serratia proteamaculans (strain 568).